Here is a 127-residue protein sequence, read N- to C-terminus: uncharacterized protein (127 aa).

A helical transmembrane segment spans residues 5-25 (ILGITIAFIILLLTTVAILFS).

It is found in the membrane. This is an uncharacterized protein from Mycoplasma genitalium (strain ATCC 33530 / DSM 19775 / NCTC 10195 / G37) (Mycoplasmoides genitalium).